The chain runs to 330 residues: Protein rlx (330 aa).

The disordered stretch occupies residues 220 to 330 (LGEDYDKGGL…EKTRGFDLEL (111 aa)). Composition is skewed to basic and acidic residues over residues 237–269 (NEQREEQARQRELEQARREKIKRDKEREKEWAR) and 279–330 (QNRE…DLEL).

In terms of biological role, this protein is probably required for relaxation complex formation and plasmid mobilization by conjugative plasmids. In Staphylococcus aureus, this protein is Protein rlx (rlx).